The sequence spans 852 residues: Sarcoplasmic reticulum histidine-rich calcium-binding protein (852 aa).

An N-terminal signal peptide occupies residues 1–27 (MGCRGPWLHTCLLWAAVASLLLPPAVT). Position 28 is a pyrrolidone carboxylic acid (Q28). Residues 44-58 (AGAPGPSGEAAAAGL) are compositionally biased toward low complexity. The tract at residues 44–770 (AGAPGPSGEA…EDTGPEDTQE (727 aa)) is disordered. Repeat copies occupy residues 59–79 (GHHG…SMEN) and 80–100 (GHHF…SREY). Residues 59 to 100 (GHHGHSHRSPGEENEDVSMENGHHFWSHRDHGETDDEVSREY) form a 2 X approximate tandem repeats region. The span at 79–101 (NGHHFWSHRDHGETDDEVSREYG) shows a compositional bias: basic and acidic residues. S120 carries the post-translational modification Phosphoserine. Positions 146 to 157 (LAEHGSHGHGHE) are enriched in basic and acidic residues. 12 stretches are compositionally biased toward acidic residues: residues 184-195 (EEGEEEEEEEEV), 208-217 (DEEDEDDDST), 233-246 (EEDE…GDST), 261-275 (EEED…GDST), 291-303 (EEDE…GDST), 319-332 (EEDD…GDST), 348-360 (EEDE…GDST), 376-388 (EEDE…GDST), 404-416 (EEDE…GDST), 432-444 (EEDE…GDST), 459-468 (EEEDEDDDDE), and 484-497 (EDDG…DDST). Repeat copies occupy residues 199–224 (HRHR…RHQA), 225–253 (HRHR…HHQA), 254–282 (HRHR…RHQA), 283–310 (HRHR…RHQA), 311–339 (HRHR…RHQA), 340–367 (HRHR…RHQA), 368–395 (HRHR…RHQA), 396–423 (HRHR…HHQA), 424–451 (HRHR…RHQA), and 452–470 (HRHR…DEGE). The interval 199-470 (HRHRGHGKED…EDEDDDDEGE (272 aa)) is 10 X tandem repeats, acidic. A 4 X approximate tandem repeats region spans residues 471-585 (HHHVPHRGHR…HHVASHPPPG (115 aa)). Positions 509-536 (HGKEEAEVTSDEHHHHVPDHGHQGHGDK) are enriched in basic and acidic residues. S518, S544, and S614 each carry phosphoserine. Composition is skewed to basic and acidic residues over residues 587–619 (RSRE…ERGH), 630–646 (PPED…KEEV), and 658–681 (DGSR…HHSL). The span at 722–733 (EEEEEEEEEEEE) shows a compositional bias: acidic residues. The span at 746 to 757 (SGREAAGGASSE) shows a compositional bias: low complexity. The span at 758 to 769 (ESAEDTGPEDTQ) shows a compositional bias: acidic residues. The tract at residues 780 to 826 (CGYCTFCNRCTECEHCHCDEDSMGEHCDQCQHCQFCYLCPLVCETVC) is metal-binding.

It belongs to the HRC family. Post-translationally, the N-terminus is blocked.

It is found in the sarcoplasmic reticulum lumen. May play a role in the regulation of calcium sequestration or release in the SR of skeletal and cardiac muscle. The sequence is that of Sarcoplasmic reticulum histidine-rich calcium-binding protein (HRC) from Oryctolagus cuniculus (Rabbit).